Consider the following 256-residue polypeptide: 5'-nucleotidase SurE (256 aa).

The a divalent metal cation site is built by aspartate 8, aspartate 9, serine 39, and asparagine 95.

The protein belongs to the SurE nucleotidase family. The cofactor is a divalent metal cation.

It is found in the cytoplasm. It catalyses the reaction a ribonucleoside 5'-phosphate + H2O = a ribonucleoside + phosphate. Functionally, nucleotidase that shows phosphatase activity on nucleoside 5'-monophosphates. In Methanosphaera stadtmanae (strain ATCC 43021 / DSM 3091 / JCM 11832 / MCB-3), this protein is 5'-nucleotidase SurE.